The sequence spans 199 residues: Holliday junction branch migration complex subunit RuvA (199 aa).

Positions 1–64 are domain I; sequence MIALLTGRLA…EDSISLFGFR (64 aa). Residues 65-143 form a domain II region; sequence TLAEKEFFQL…KMDVAPSAQE (79 aa). The segment at 144–154 is flexible linker; it reads APSSEAPAEVA. Positions 154–199 are domain III; that stretch reads ADDVASALVNLGYKEAVVRKVLAEMSIEPDASTEAVLRQALKVLMK.

This sequence belongs to the RuvA family. As to quaternary structure, homotetramer. Forms an RuvA(8)-RuvB(12)-Holliday junction (HJ) complex. HJ DNA is sandwiched between 2 RuvA tetramers; dsDNA enters through RuvA and exits via RuvB. An RuvB hexamer assembles on each DNA strand where it exits the tetramer. Each RuvB hexamer is contacted by two RuvA subunits (via domain III) on 2 adjacent RuvB subunits; this complex drives branch migration. In the full resolvosome a probable DNA-RuvA(4)-RuvB(12)-RuvC(2) complex forms which resolves the HJ.

It localises to the cytoplasm. Functionally, the RuvA-RuvB-RuvC complex processes Holliday junction (HJ) DNA during genetic recombination and DNA repair, while the RuvA-RuvB complex plays an important role in the rescue of blocked DNA replication forks via replication fork reversal (RFR). RuvA specifically binds to HJ cruciform DNA, conferring on it an open structure. The RuvB hexamer acts as an ATP-dependent pump, pulling dsDNA into and through the RuvAB complex. HJ branch migration allows RuvC to scan DNA until it finds its consensus sequence, where it cleaves and resolves the cruciform DNA. The chain is Holliday junction branch migration complex subunit RuvA from Geobacter sulfurreducens (strain ATCC 51573 / DSM 12127 / PCA).